The following is a 173-amino-acid chain: ATP synthase subunit b 1 (173 aa).

Residues 15 to 37 (TFWVTVAVLIFLAFFGRKIVGAI) form a helical membrane-spanning segment.

It belongs to the ATPase B chain family. As to quaternary structure, F-type ATPases have 2 components, F(1) - the catalytic core - and F(0) - the membrane proton channel. F(1) has five subunits: alpha(3), beta(3), gamma(1), delta(1), epsilon(1). F(0) has three main subunits: a(1), b(2) and c(10-14). The alpha and beta chains form an alternating ring which encloses part of the gamma chain. F(1) is attached to F(0) by a central stalk formed by the gamma and epsilon chains, while a peripheral stalk is formed by the delta and b chains.

Its subcellular location is the cell inner membrane. Functionally, f(1)F(0) ATP synthase produces ATP from ADP in the presence of a proton or sodium gradient. F-type ATPases consist of two structural domains, F(1) containing the extramembraneous catalytic core and F(0) containing the membrane proton channel, linked together by a central stalk and a peripheral stalk. During catalysis, ATP synthesis in the catalytic domain of F(1) is coupled via a rotary mechanism of the central stalk subunits to proton translocation. Component of the F(0) channel, it forms part of the peripheral stalk, linking F(1) to F(0). This Acidiphilium cryptum (strain JF-5) protein is ATP synthase subunit b 1.